The following is a 102-amino-acid chain: Small ribosomal subunit protein uS10 (102 aa).

Belongs to the universal ribosomal protein uS10 family. As to quaternary structure, part of the 30S ribosomal subunit.

Involved in the binding of tRNA to the ribosomes. This Nocardioides sp. (strain ATCC BAA-499 / JS614) protein is Small ribosomal subunit protein uS10.